The primary structure comprises 197 residues: Imidazoleglycerol-phosphate dehydratase (197 aa).

The protein belongs to the imidazoleglycerol-phosphate dehydratase family.

It is found in the cytoplasm. It catalyses the reaction D-erythro-1-(imidazol-4-yl)glycerol 3-phosphate = 3-(imidazol-4-yl)-2-oxopropyl phosphate + H2O. It functions in the pathway amino-acid biosynthesis; L-histidine biosynthesis; L-histidine from 5-phospho-alpha-D-ribose 1-diphosphate: step 6/9. This is Imidazoleglycerol-phosphate dehydratase from Hahella chejuensis (strain KCTC 2396).